We begin with the raw amino-acid sequence, 98 residues long: Large ribosomal subunit protein uL23 (98 aa).

This sequence belongs to the universal ribosomal protein uL23 family. In terms of assembly, part of the 50S ribosomal subunit. Contacts protein L29, and trigger factor when it is bound to the ribosome.

In terms of biological role, one of the early assembly proteins it binds 23S rRNA. One of the proteins that surrounds the polypeptide exit tunnel on the outside of the ribosome. Forms the main docking site for trigger factor binding to the ribosome. This Rickettsia akari (strain Hartford) protein is Large ribosomal subunit protein uL23.